The chain runs to 3332 residues: Nonribosomal peptide synthetase imqB (3332 aa).

Residues 230-622 (FSEQVKAHPG…IGRKDTQVKV (393 aa)) are adenylation 1. A Carrier 1 domain is found at 764–846 (GRITPQEKLL…DMARCITRVD (83 aa)). Position 801 is an O-(pantetheine 4'-phosphoryl)serine (serine 801). Residues 886–1314 (DIYPCTPLQE…NCLTRKELHQ (429 aa)) are condensation 1. Residues 1336-1740 (EVSNTRPTAP…GRKDRQLKVR (405 aa)) are adenylation 2. In terms of domain architecture, Carrier 2 spans 1880–1954 (AIATPKEEKL…EMAEKAAETG (75 aa)). The residue at position 1915 (serine 1915) is an O-(pantetheine 4'-phosphoryl)serine. Positions 1992-2402 (EDIYPCTPLQ…CLSEIDTQQI (411 aa)) are condensation 2. The interval 2422-2819 (AQQAREHPAT…GRKDTQVKIR (398 aa)) is adenylation 3. Positions 2963 to 3039 (EVATNDEAAV…DLASRIGRVE (77 aa)) constitute a Carrier 3 domain. Position 3000 is an O-(pantetheine 4'-phosphoryl)serine (serine 3000). The thioesterase (TE) domain stretch occupies residues 3058–3323 (SSNPTLIQGQ…ETTRHIRDFC (266 aa)).

The protein belongs to the NRP synthetase family.

Its pathway is secondary metabolite biosynthesis. Nonribosomal peptide synthetase; part of the gene cluster that mediates the biosynthesis of imizoquins A to D, tripeptide-derived alkaloids that serve a protective role against oxidative stress that are essential for normal germination. ImqB is a canonical three-module NRPS that assembles the tripeptide backbone of the imizoquins via condensation of Trp, Tyr, and Leu-derived precursors. N-methylation by imqF and phenol oxidation by imqC, followed by cyclization via the FAD-dependent oxidase imqH carry out the three-step transformation of L-tyrosine into tetrahydroisoquinoline. Importantly, this sequence requires the presence of a free amine in the tyrosine moiety, indicating that isoquinoline formation occurs prior to peptide bond formation. The imidazolidin-4-one ring of imizoquins could form following additional oxidation of the methyl-derived bridgehead carbon by imqH. Lastly, O-methylation by imqG and leucine hydroxylation by imqE complete biosynthesis of the imizoquins. This chain is Nonribosomal peptide synthetase imqB, found in Aspergillus flavus (strain ATCC 200026 / FGSC A1120 / IAM 13836 / NRRL 3357 / JCM 12722 / SRRC 167).